Consider the following 209-residue polypeptide: Pyridoxine/pyridoxamine 5'-phosphate oxidase (209 aa).

Substrate-binding positions include 7–10 (REDY) and lysine 64. Residues 59-64 (RIVLLK), 74-75 (FT), arginine 80, and lysine 81 contribute to the FMN site. Substrate-binding residues include tyrosine 121, arginine 125, and serine 129. Residues 138-139 (QS) and tryptophan 182 each bind FMN. Substrate is bound at residue 188-190 (RLH). Arginine 192 is an FMN binding site.

The protein belongs to the pyridoxamine 5'-phosphate oxidase family. In terms of assembly, homodimer. It depends on FMN as a cofactor.

The enzyme catalyses pyridoxamine 5'-phosphate + O2 + H2O = pyridoxal 5'-phosphate + H2O2 + NH4(+). It catalyses the reaction pyridoxine 5'-phosphate + O2 = pyridoxal 5'-phosphate + H2O2. Its pathway is cofactor metabolism; pyridoxal 5'-phosphate salvage; pyridoxal 5'-phosphate from pyridoxamine 5'-phosphate: step 1/1. It functions in the pathway cofactor metabolism; pyridoxal 5'-phosphate salvage; pyridoxal 5'-phosphate from pyridoxine 5'-phosphate: step 1/1. Its function is as follows. Catalyzes the oxidation of either pyridoxine 5'-phosphate (PNP) or pyridoxamine 5'-phosphate (PMP) into pyridoxal 5'-phosphate (PLP). This Actinobacillus pleuropneumoniae serotype 7 (strain AP76) protein is Pyridoxine/pyridoxamine 5'-phosphate oxidase.